The primary structure comprises 109 residues: Phycoerythrin alpha-1 subunit (109 aa).

(2R,3E)-phycocyanobilin is bound by residues Val6, Ala16, Phe17, Pro20, Asp27, Ala28, and Ala39.

Belongs to the phycoerythrin family. In terms of assembly, heterotetramer of 2 identical alpha chains and 2 identical beta chains which form 2 alpha-beta heterodimers within the heterotetramer. The two alpha-beta heterodimers are rotated to an open configuration in contrast to the closed configuration found in other cryptophyte species due to the insertion of a single amino acid, Asp-65, in a conserved region of the alpha chain. In the open form, the central chromophores are not in physical contact but are separated by a water-filled channel. Contains three phycocyanobilin chromophores with binding mediated by both the alpha and beta subunits.

The protein resides in the plastid. The protein localises to the chloroplast thylakoid membrane. Light-harvesting photosynthetic tetrapyrrole chromophore-protein from the phycobiliprotein complex. The chain is Phycoerythrin alpha-1 subunit from Hemiselmis virescens.